A 506-amino-acid polypeptide reads, in one-letter code: Maturase K (506 aa).

The protein belongs to the intron maturase 2 family. MatK subfamily.

It localises to the plastid. The protein resides in the chloroplast. Functionally, usually encoded in the trnK tRNA gene intron. Probably assists in splicing its own and other chloroplast group II introns. This Phyllodoce empetriformis (Pink mountainheath) protein is Maturase K.